Consider the following 126-residue polypeptide: Profilin-3 (126 aa).

This sequence belongs to the profilin family. As to quaternary structure, occurs in many kinds of cells as a complex with monomeric actin in a 1:1 ratio. In terms of tissue distribution, in embryos, expression is specifically detected in body wall muscle cells. In adults, expression is localized to a striking dot-like fashion in body wall muscle.

It localises to the cytoplasm. The protein localises to the cytoskeleton. Binds to actin and affects the structure of the cytoskeleton. At high concentrations, profilin prevents the polymerization of actin, whereas it enhances it at low concentrations. By binding to PIP2, it inhibits the formation of IP3 and DG. Also binds to poly(L-proline) and phosphatidylinositol 4,5-bisphosphate micelles. This is Profilin-3 (pfn-3) from Caenorhabditis elegans.